The following is a 186-amino-acid chain: Ribosome-recycling factor (186 aa).

Belongs to the RRF family.

It localises to the cytoplasm. Responsible for the release of ribosomes from messenger RNA at the termination of protein biosynthesis. May increase the efficiency of translation by recycling ribosomes from one round of translation to another. The polypeptide is Ribosome-recycling factor (Coprothermobacter proteolyticus (strain ATCC 35245 / DSM 5265 / OCM 4 / BT)).